The sequence spans 292 residues: Bifunctional protein FolD (292 aa).

Residues 161–163 and Ile231 each bind NADP(+); that span reads GRS.

It belongs to the tetrahydrofolate dehydrogenase/cyclohydrolase family. Homodimer.

The catalysed reaction is (6R)-5,10-methylene-5,6,7,8-tetrahydrofolate + NADP(+) = (6R)-5,10-methenyltetrahydrofolate + NADPH. It catalyses the reaction (6R)-5,10-methenyltetrahydrofolate + H2O = (6R)-10-formyltetrahydrofolate + H(+). It functions in the pathway one-carbon metabolism; tetrahydrofolate interconversion. Functionally, catalyzes the oxidation of 5,10-methylenetetrahydrofolate to 5,10-methenyltetrahydrofolate and then the hydrolysis of 5,10-methenyltetrahydrofolate to 10-formyltetrahydrofolate. The polypeptide is Bifunctional protein FolD (Protochlamydia amoebophila (strain UWE25)).